A 231-amino-acid polypeptide reads, in one-letter code: Phosphoribosylformylglycinamidine synthase subunit PurQ (231 aa).

A Glutamine amidotransferase type-1 domain is found at 7–231; that stretch reads GVVVFPGSNC…RLFASLFRQL (225 aa). C89 acts as the Nucleophile in catalysis. Residues H206 and E208 contribute to the active site.

In terms of assembly, part of the FGAM synthase complex composed of 1 PurL, 1 PurQ and 2 PurS subunits.

Its subcellular location is the cytoplasm. The enzyme catalyses N(2)-formyl-N(1)-(5-phospho-beta-D-ribosyl)glycinamide + L-glutamine + ATP + H2O = 2-formamido-N(1)-(5-O-phospho-beta-D-ribosyl)acetamidine + L-glutamate + ADP + phosphate + H(+). The catalysed reaction is L-glutamine + H2O = L-glutamate + NH4(+). Its pathway is purine metabolism; IMP biosynthesis via de novo pathway; 5-amino-1-(5-phospho-D-ribosyl)imidazole from N(2)-formyl-N(1)-(5-phospho-D-ribosyl)glycinamide: step 1/2. Part of the phosphoribosylformylglycinamidine synthase complex involved in the purines biosynthetic pathway. Catalyzes the ATP-dependent conversion of formylglycinamide ribonucleotide (FGAR) and glutamine to yield formylglycinamidine ribonucleotide (FGAM) and glutamate. The FGAM synthase complex is composed of three subunits. PurQ produces an ammonia molecule by converting glutamine to glutamate. PurL transfers the ammonia molecule to FGAR to form FGAM in an ATP-dependent manner. PurS interacts with PurQ and PurL and is thought to assist in the transfer of the ammonia molecule from PurQ to PurL. This Chlorobium luteolum (strain DSM 273 / BCRC 81028 / 2530) (Pelodictyon luteolum) protein is Phosphoribosylformylglycinamidine synthase subunit PurQ.